A 386-amino-acid polypeptide reads, in one-letter code: 2,3-diketo-5-methylthiopentyl-1-phosphate enolase (386 aa).

Lys-85 acts as the Proton acceptor in catalysis. Substrate-binding positions include Lys-131, 157–160 (KDDE), His-248, Gly-316, and 338–339 (GT). Mg(2+) contacts are provided by Lys-157, Asp-159, and Glu-160. Lys-157 is modified (N6-carboxylysine).

It belongs to the RuBisCO large chain family. Type IV subfamily. Homodimer. Mg(2+) serves as cofactor.

It catalyses the reaction 5-methylsulfanyl-2,3-dioxopentyl phosphate = 2-hydroxy-5-methylsulfanyl-3-oxopent-1-enyl phosphate. Its pathway is amino-acid biosynthesis; L-methionine biosynthesis via salvage pathway; L-methionine from S-methyl-5-thio-alpha-D-ribose 1-phosphate: step 3/6. Its function is as follows. Catalyzes the enolization of 2,3-diketo-5-methylthiopentyl-1-phosphate (DK-MTP-1-P) into 2-hydroxy-3-keto-5-methylthiopentenyl-1-phosphate (HK-MTPenyl-1-P). The polypeptide is 2,3-diketo-5-methylthiopentyl-1-phosphate enolase (mtnW) (Microcystis aeruginosa).